We begin with the raw amino-acid sequence, 252 residues long: Neurexophilin-3 (252 aa).

The N-terminal stretch at 1 to 22 (MQLTRCCFVFLVQGSLYLVICG) is a signal peptide. Residues 23–75 (QEDGPPGSEDPEHDDHEGQPRPRVPRKRGHISPKSRPLANSTLLGLLAPPGEV) are II. Residues 27-59 (PPGSEDPEHDDHEGQPRPRVPRKRGHISPKSRP) are disordered. Over residues 45–55 (RVPRKRGHISP) the composition is skewed to basic residues. Residues asparagine 62, asparagine 127, asparagine 137, and asparagine 143 are each glycosylated (N-linked (GlcNAc...) asparagine). Residues 76 to 157 (WGILGQPPNR…LVPPSKAVEF (82 aa)) form an III region. The interval 158 to 166 (HQEQQIFIE) is IV (linker domain). The tract at residues 167-252 (AKASKIFNCR…HSDTPYYPSG (86 aa)) is v (Cys-rich).

The protein belongs to the neurexophilin family. May be proteolytically processed at the boundary between the N-terminal non-conserved and the central conserved domain in neuron-like cells. Brain. Detected in several other tissues.

The protein localises to the secreted. In terms of biological role, may be signaling molecules that resemble neuropeptides. Ligand for alpha-neurexins. The sequence is that of Neurexophilin-3 (Nxph3) from Rattus norvegicus (Rat).